Consider the following 206-residue polypeptide: Guanylate kinase (206 aa).

A Guanylate kinase-like domain is found at 6–184; the sequence is GTLYIISAPS…ALGDLKAIFR (179 aa). ATP is bound at residue 13–20; it reads APSGAGKS.

Belongs to the guanylate kinase family.

The protein localises to the cytoplasm. The enzyme catalyses GMP + ATP = GDP + ADP. Its function is as follows. Essential for recycling GMP and indirectly, cGMP. The sequence is that of Guanylate kinase from Pseudomonas fluorescens (strain ATCC BAA-477 / NRRL B-23932 / Pf-5).